A 129-amino-acid chain; its full sequence is Glycine cleavage system H protein (129 aa).

The Lipoyl-binding domain maps to 24 to 106 (LFKIGVSEFA…IGDGWLLIIK (83 aa)). Lysine 65 bears the N6-lipoyllysine mark.

It belongs to the GcvH family. As to quaternary structure, the glycine cleavage system is composed of four proteins: P, T, L and H. (R)-lipoate serves as cofactor.

Functionally, the glycine cleavage system catalyzes the degradation of glycine. The H protein shuttles the methylamine group of glycine from the P protein to the T protein. This chain is Glycine cleavage system H protein, found in Prochlorococcus marinus subsp. pastoris (strain CCMP1986 / NIES-2087 / MED4).